The following is a 102-amino-acid chain: NADH-quinone oxidoreductase subunit K 2 (102 aa).

Helical transmembrane passes span F5–V25, L30–G50, and L65–L85.

Belongs to the complex I subunit 4L family. In terms of assembly, NDH-1 is composed of 14 different subunits. Subunits NuoA, H, J, K, L, M, N constitute the membrane sector of the complex.

It localises to the cell inner membrane. The catalysed reaction is a quinone + NADH + 5 H(+)(in) = a quinol + NAD(+) + 4 H(+)(out). Its function is as follows. NDH-1 shuttles electrons from NADH, via FMN and iron-sulfur (Fe-S) centers, to quinones in the respiratory chain. The immediate electron acceptor for the enzyme in this species is believed to be ubiquinone. Couples the redox reaction to proton translocation (for every two electrons transferred, four hydrogen ions are translocated across the cytoplasmic membrane), and thus conserves the redox energy in a proton gradient. This is NADH-quinone oxidoreductase subunit K 2 from Geobacter sulfurreducens (strain ATCC 51573 / DSM 12127 / PCA).